Reading from the N-terminus, the 218-residue chain is Thiamine-phosphate synthase (218 aa).

Residues 43 to 47 (QFRDK) and Asn78 each bind 4-amino-2-methyl-5-(diphosphooxymethyl)pyrimidine. Mg(2+)-binding residues include Asp79 and Asp98. A 4-amino-2-methyl-5-(diphosphooxymethyl)pyrimidine-binding site is contributed by Ser117. 143-145 (TNS) lines the 2-[(2R,5Z)-2-carboxy-4-methylthiazol-5(2H)-ylidene]ethyl phosphate pocket. Lys146 is a binding site for 4-amino-2-methyl-5-(diphosphooxymethyl)pyrimidine. 2-[(2R,5Z)-2-carboxy-4-methylthiazol-5(2H)-ylidene]ethyl phosphate is bound by residues Gly174 and 194–195 (IS).

This sequence belongs to the thiamine-phosphate synthase family. The cofactor is Mg(2+).

It carries out the reaction 2-[(2R,5Z)-2-carboxy-4-methylthiazol-5(2H)-ylidene]ethyl phosphate + 4-amino-2-methyl-5-(diphosphooxymethyl)pyrimidine + 2 H(+) = thiamine phosphate + CO2 + diphosphate. The catalysed reaction is 2-(2-carboxy-4-methylthiazol-5-yl)ethyl phosphate + 4-amino-2-methyl-5-(diphosphooxymethyl)pyrimidine + 2 H(+) = thiamine phosphate + CO2 + diphosphate. The enzyme catalyses 4-methyl-5-(2-phosphooxyethyl)-thiazole + 4-amino-2-methyl-5-(diphosphooxymethyl)pyrimidine + H(+) = thiamine phosphate + diphosphate. It participates in cofactor biosynthesis; thiamine diphosphate biosynthesis; thiamine phosphate from 4-amino-2-methyl-5-diphosphomethylpyrimidine and 4-methyl-5-(2-phosphoethyl)-thiazole: step 1/1. In terms of biological role, condenses 4-methyl-5-(beta-hydroxyethyl)thiazole monophosphate (THZ-P) and 2-methyl-4-amino-5-hydroxymethyl pyrimidine pyrophosphate (HMP-PP) to form thiamine monophosphate (TMP). The protein is Thiamine-phosphate synthase of Lactococcus lactis subsp. cremoris (strain MG1363).